Reading from the N-terminus, the 463-residue chain is Glycine--tRNA ligase (463 aa).

Substrate-binding residues include Arg-98 and Glu-170. Residues 202 to 204, 212 to 217, 287 to 288, and 331 to 334 contribute to the ATP site; these read RNE, FRTREF, EL, and GIER. Residue 217-221 coordinates substrate; sequence FEQFE. 327–331 provides a ligand contact to substrate; sequence EPSLG.

This sequence belongs to the class-II aminoacyl-tRNA synthetase family. Homodimer.

The protein resides in the cytoplasm. It carries out the reaction tRNA(Gly) + glycine + ATP = glycyl-tRNA(Gly) + AMP + diphosphate. Functionally, catalyzes the attachment of glycine to tRNA(Gly). The polypeptide is Glycine--tRNA ligase (Mycoplasmoides gallisepticum (strain R(low / passage 15 / clone 2)) (Mycoplasma gallisepticum)).